Here is a 1220-residue protein sequence, read N- to C-terminus: Plasma membrane calcium-transporting ATPase 1 (1220 aa).

Position 2 is an N-acetylglycine (Gly2). The Cytoplasmic portion of the chain corresponds to 2–105; it reads GDMANNSVVY…KTFLQLVWEA (104 aa). Phosphoserine is present on residues Ser8 and Ser17. A helical transmembrane segment spans residues 106 to 126; sequence LQDVTLIILEIAAIVSLGLSF. Residues 127 to 154 lie on the Extracellular side of the membrane; it reads YQPPEGDNALCGEVSVGEEEGEGETGWI. The helical transmembrane segment at 155 to 175 threads the bilayer; it reads EGAAILLSVVCVVLVTAFNDW. The Cytoplasmic portion of the chain corresponds to 176–366; sequence SKEKQFRGLQ…KEKSVLQGKL (191 aa). Residues 297–356 are disordered; the sequence is EEEKKDEKKKEKKNKKQDGAIENRNKAKAQDGEPMEMQPLKSEEGGDGDEKDKKKANLPK. Composition is skewed to basic and acidic residues over residues 312–327 and 337–356; these read KQDG…KAQD and KSEE…NLPK. At Ser338 the chain carries Phosphoserine. The chain crosses the membrane as a helical span at residues 367–386; it reads TKLAVQIGKAGLLMSAITVI. At 387 to 418 the chain is on the extracellular side; the sequence is ILVLYFLIDTFWVQKRPWLAECTPIYIQYFVK. The helical transmembrane segment at 419-439 threads the bilayer; it reads FFIIGVTVLVVAVPEGLPLPV. Residues 440–855 are Cytoplasmic-facing; sequence TISLAYSVNE…RNVYDSISKF (416 aa). The active-site 4-aspartylphosphate intermediate is the Asp475. 3 residues coordinate Mg(2+): Asp475, Thr477, and Asp797. The helical transmembrane segment at 856 to 876 threads the bilayer; the sequence is LQFQLTVNVVAVIVAFTGACI. Over 877–882 the chain is Extracellular; sequence TQDSPL. Residues 883-903 traverse the membrane as a helical segment; the sequence is KAVQMLWVNLIMDTLASLALA. Residues 904 to 927 are Cytoplasmic-facing; the sequence is TEPPTESLLLGKPYGRNKPLISRT. A helical membrane pass occupies residues 928–948; the sequence is MMKNILGHAFYQLVVVFTLLL. At 949-971 the chain is on the extracellular side; the sequence is AGEKFFDIDSGRNAPLHAPPSEH. The chain crosses the membrane as a helical span at residues 972–991; sequence YTIVFNIFVLMQLFNEINAR. The Cytoplasmic segment spans residues 992-1005; that stretch reads KIHGERNVFEGIFN. A helical transmembrane segment spans residues 1006-1027; the sequence is NAIFCTIVLGTFVVQIIIVQFA. Over 1028 to 1039 the chain is Extracellular; sequence GKPFSCSELSVE. Residues 1040-1060 traverse the membrane as a helical segment; it reads QWLWSIFLGMGTLLWGQLIST. Over 1061 to 1220 the chain is Cytoplasmic; sequence IPTSRLKFQK…SPLHSLETSL (160 aa). The calmodulin-binding subdomain A stretch occupies residues 1100-1117; it reads LRRWQILWFRGLNRIQTQ. Thr1116 carries the post-translational modification Phosphothreonine; by PKC. A required for basolateral membrane targeting region spans residues 1118 to 1220; it reads IRVVNAFRSS…SPLHSLETSL (103 aa). Residues Ser1140 and Ser1155 each carry the phosphoserine modification. The interval 1160–1220 is disordered; sequence PLIDDTDAED…SPLHSLETSL (61 aa). Thr1165 carries the post-translational modification Phosphothreonine. Ser1177 carries the phosphoserine; by PKA modification. Phosphoserine is present on residues Ser1178 and Ser1182. A compositionally biased stretch (polar residues) spans 1200-1220; sequence MNKSATSSSPGSPLHSLETSL.

This sequence belongs to the cation transport ATPase (P-type) (TC 3.A.3) family. Type IIB subfamily. Monomer. Dimer. Oligomer. Calmodulin binding. Interacts with PDZD11. Interacts with SLC35G1 and STIM1. Interacts with YWHAE; interacts with the monomeric and dimeric forms of the YWHAE but prefer the monomer form; this interaction inhibits calcium-transporting ATPase activity. Interacts with NPTN; this interaction stabilizes ATP2B1 and increases ATPase activity; this interaction controls T cell calcium homeostasis following T cell activation. Interacts with EPB41; regulates small intestinal calcium absorption through regulation of membrane expression of ATP2B1. Isoform B is ubiquitously expressed and is the most predominant isoform. Isoform C is expressed at much lower levels in all tissues tested, but liver, while isoform A is found only in aorta, brain and stomach.

It localises to the cell membrane. The protein resides in the basolateral cell membrane. The protein localises to the synapse. It is found in the presynaptic cell membrane. Its subcellular location is the cytoplasmic vesicle. It localises to the secretory vesicle. The protein resides in the synaptic vesicle membrane. It catalyses the reaction Ca(2+)(in) + ATP + H2O = Ca(2+)(out) + ADP + phosphate + H(+). Functionally, catalyzes the hydrolysis of ATP coupled with the transport of calcium from the cytoplasm to the extracellular space thereby maintaining intracellular calcium homeostasis. Plays a role in blood pressure regulation through regulation of intracellular calcium concentration and nitric oxide production leading to regulation of vascular smooth muscle cells vasoconstriction. Positively regulates bone mineralization through absorption of calcium from the intestine. Plays dual roles in osteoclast differentiation and survival by regulating RANKL-induced calcium oscillations in preosteoclasts and mediating calcium extrusion in mature osteoclasts. Regulates insulin sensitivity through calcium/calmodulin signaling pathway by regulating AKT1 activation and NOS3 activation in endothelial cells. May play a role in synaptic transmission by modulating calcium and proton dynamics at the synaptic vesicles. This is Plasma membrane calcium-transporting ATPase 1 from Oryctolagus cuniculus (Rabbit).